Here is a 140-residue protein sequence, read N- to C-terminus: Small ribosomal subunit protein uS8c (140 aa).

This sequence belongs to the universal ribosomal protein uS8 family. Part of the 30S ribosomal subunit.

It is found in the plastid. Its subcellular location is the chloroplast. Functionally, one of the primary rRNA binding proteins, it binds directly to 16S rRNA central domain where it helps coordinate assembly of the platform of the 30S subunit. This Euglena gracilis protein is Small ribosomal subunit protein uS8c (rps8).